The following is a 481-amino-acid chain: Argininosuccinate lyase (481 aa).

This sequence belongs to the lyase 1 family. Argininosuccinate lyase subfamily.

Its subcellular location is the cytoplasm. The catalysed reaction is 2-(N(omega)-L-arginino)succinate = fumarate + L-arginine. It functions in the pathway amino-acid biosynthesis; L-arginine biosynthesis; L-arginine from L-ornithine and carbamoyl phosphate: step 3/3. The sequence is that of Argininosuccinate lyase from Methanococcus vannielii (strain ATCC 35089 / DSM 1224 / JCM 13029 / OCM 148 / SB).